Here is a 446-residue protein sequence, read N- to C-terminus: Histidinol dehydrogenase homolog (446 aa).

His266 provides a ligand contact to Zn(2+). Residues Glu334 and His335 each act as proton acceptor in the active site. A Zn(2+)-binding site is contributed by His427.

The protein belongs to the histidinol dehydrogenase family. Requires Zn(2+) as cofactor.

The protein is Histidinol dehydrogenase homolog of Colwellia psychrerythraea (strain 34H / ATCC BAA-681) (Vibrio psychroerythus).